The primary structure comprises 70 residues: Large ribosomal subunit protein bL31 (70 aa).

The Zn(2+) site is built by Cys-16, Cys-18, Cys-38, and Cys-41.

It belongs to the bacterial ribosomal protein bL31 family. Type A subfamily. In terms of assembly, part of the 50S ribosomal subunit. Requires Zn(2+) as cofactor.

Functionally, binds the 23S rRNA. This chain is Large ribosomal subunit protein bL31, found in Vesicomyosocius okutanii subsp. Calyptogena okutanii (strain HA).